We begin with the raw amino-acid sequence, 181 residues long: uncharacterized protein (181 aa).

Residues 126 to 148 (SYKDKEEEEDEDPEEDDDDPRVQ) form a disordered region. Over residues 131–144 (EEEEDEDPEEDDDD) the composition is skewed to acidic residues.

This sequence belongs to the chlamydial CPn_0422/CT_273/TC_0545 family.

This is an uncharacterized protein from Chlamydia pneumoniae (Chlamydophila pneumoniae).